The sequence spans 130 residues: Protein Wnt-9 (130 aa).

Ser-1 is lipidated: O-palmitoleoyl serine; by PORCN. The disordered stretch occupies residues 41-69 (AGERTIARSRRRPREQRGQRRPKVSDGAL). Basic residues predominate over residues 47-62 (ARSRRRPREQRGQRRP). Asn-97 carries an N-linked (GlcNAc...) asparagine glycan. A disulfide bridge connects residues Cys-100 and Cys-111.

Belongs to the Wnt family. Post-translationally, palmitoleoylation is required for efficient binding to frizzled receptors. Depalmitoleoylation leads to Wnt signaling pathway inhibition.

Its subcellular location is the secreted. It localises to the extracellular space. The protein localises to the extracellular matrix. Its function is as follows. Ligand for members of the frizzled family of seven transmembrane receptors. Probable developmental protein. May be a signaling molecule which affects the development of discrete regions of tissues. Is likely to signal over only few cell diameters. The polypeptide is Protein Wnt-9 (WNT-9) (Eptatretus stoutii (Pacific hagfish)).